The sequence spans 906 residues: Cadherin-2 (906 aa).

Residues 1–25 (MCRIVGAPRTLLPLLAALLQASVEA) form the signal peptide. Residues 26–159 (SGGIALCKTG…HNGHLQRQKR (134 aa)) constitute a propeptide that is removed on maturation. A phosphoserine mark is found at Ser-96 and Ser-135. 5 consecutive Cadherin domains span residues 160–267 (DWVI…RPEF), 268–382 (LHQV…PPEF), 383–497 (TAMS…NPYF), 498–603 (APNP…DNAP), and 604–714 (QVVP…DVDR). Topologically, residues 160–724 (DWVIPPINLP…IVGAGLGTGA (565 aa)) are extracellular. Glu-170 provides a ligand contact to Ca(2+). An N-linked (GlcNAc...) asparagine glycan is attached at Asn-190. Ca(2+) is bound by residues Asp-226, Glu-228, Asp-259, Met-260, Asn-261, Asp-262, and Asn-263. The N-linked (GlcNAc...) asparagine glycan is linked to Asn-273. Residues Asp-293, Asp-295, and Asn-301 each contribute to the Ca(2+) site. Residue Asn-325 is glycosylated (N-linked (GlcNAc...) asparagine). Asp-353 serves as a coordination point for Ca(2+). Residues Asn-402, Asn-572, Asn-622, Asn-651, and Asn-692 are each glycosylated (N-linked (GlcNAc...) asparagine). Residues 725–745 (IIAILLCIIILLILVLMFVVW) traverse the membrane as a helical segment. Topologically, residues 746–906 (MKRRDKERQA…LADMYGGGDD (161 aa)) are cytoplasmic. Low complexity predominate over residues 863-880 (SGSTAGSLSSLNSSSSGG). Residues 863–884 (SGSTAGSLSSLNSSSSGGEQDY) are disordered.

As to quaternary structure, homodimer (via extracellular region). Can also form heterodimers with other cadherins (via extracellular region). Dimerization occurs in trans, i.e. with a cadherin chain from another cell. Interacts with CDCP1. Interacts with PCDH8; this complex may also include TAOK2. The interaction with PCDH8 may lead to internalization through TAOK2/p38 MAPK pathway. Identified in a complex containing FGFR4, NCAM1, CDH2, PLCG1, FRS2, SRC, SHC1, GAP43 and CTTN. May interact with OBSCN (via protein kinase domain 2). Interacts with FBXO45. Post-translationally, cleaved by MMP24. Ectodomain cleavage leads to the generation of a soluble 90 kDa N-terminal soluble fragment and a 45 kDa membrane-bound C-terminal fragment 1 (CTF1), which is further cleaved by gamma-secretase into a 35 kDa. Cleavage in neural stem cells by MMP24 affects CDH2-mediated anchorage of neural stem cells to ependymocytes in the adult subependymal zone, leading to modulate neural stem cell quiescence. In terms of processing, may be phosphorylated by OBSCN.

The protein resides in the cell membrane. It localises to the sarcolemma. The protein localises to the cell junction. Its subcellular location is the cell surface. It is found in the desmosome. The protein resides in the adherens junction. Its function is as follows. Calcium-dependent cell adhesion protein; preferentially mediates homotypic cell-cell adhesion by dimerization with a CDH2 chain from another cell. Cadherins may thus contribute to the sorting of heterogeneous cell types. Acts as a regulator of neural stem cells quiescence by mediating anchorage of neural stem cells to ependymocytes in the adult subependymal zone: upon cleavage by MMP24, CDH2-mediated anchorage is affected, leading to modulate neural stem cell quiescence. Plays a role in cell-to-cell junction formation between pancreatic beta cells and neural crest stem (NCS) cells, promoting the formation of processes by NCS cells. CDH2 may be involved in neuronal recognition mechanism. In hippocampal neurons, may regulate dendritic spine density. This is Cadherin-2 (CDH2) from Rhinolophus ferrumequinum (Greater horseshoe bat).